The sequence spans 727 residues: NADH-ubiquinone oxidoreductase 75 kDa subunit, mitochondrial (727 aa).

The transit peptide at 1–23 (MLRIPVKRALIGLSKSPKGYVRS) directs the protein to the mitochondrion. The 2Fe-2S ferredoxin-type domain maps to 30-108 (NLIEVFVDGQ…GWNILTNSEK (79 aa)). Cysteine 64, cysteine 75, and cysteine 78 together coordinate [2Fe-2S] cluster. N6-acetyllysine is present on lysine 84. Cysteine 92 is a [2Fe-2S] cluster binding site. Positions 108 to 147 (KSKKAREGVMEFLLANHPLDCPICDQGGECDLQDQSMMFG) constitute a 4Fe-4S His(Cys)3-ligated-type domain. The [4Fe-4S] cluster site is built by histidine 124, cysteine 128, cysteine 131, cysteine 137, cysteine 176, cysteine 179, cysteine 182, and cysteine 226. Residues 245 to 301 (TRKTESIDVMDAVGSNIVVSTRTGEVMRILPRMHEDINEEWISDKTRFAYDGLKRQR) form the 4Fe-4S Mo/W bis-MGD-type domain. Lysine 499 and lysine 709 each carry N6-acetyllysine.

Belongs to the complex I 75 kDa subunit family. Core subunit of respiratory chain NADH dehydrogenase (Complex I) which is composed of 45 different subunits. This is the largest subunit of complex I and it is a component of the iron-sulfur (IP) fragment of the enzyme. Complex I associates with ubiquinol-cytochrome reductase complex (Complex III) to form supercomplexes. Interacts with MDM2 and AKAP1. [2Fe-2S] cluster is required as a cofactor. Requires [4Fe-4S] cluster as cofactor.

The protein localises to the mitochondrion inner membrane. It catalyses the reaction a ubiquinone + NADH + 5 H(+)(in) = a ubiquinol + NAD(+) + 4 H(+)(out). Core subunit of the mitochondrial membrane respiratory chain NADH dehydrogenase (Complex I) which catalyzes electron transfer from NADH through the respiratory chain, using ubiquinone as an electron acceptor. Essential for catalysing the entry and efficient transfer of electrons within complex I. Plays a key role in the assembly and stability of complex I and participates in the association of complex I with ubiquinol-cytochrome reductase complex (Complex III) to form supercomplexes. This Rattus norvegicus (Rat) protein is NADH-ubiquinone oxidoreductase 75 kDa subunit, mitochondrial (Ndufs1).